The chain runs to 369 residues: UDP-N-acetylglucosamine--N-acetylmuramyl-(pentapeptide) pyrophosphoryl-undecaprenol N-acetylglucosamine transferase (369 aa).

UDP-N-acetyl-alpha-D-glucosamine is bound by residues 15 to 17 (TGG), N126, R169, S197, and Q299.

Belongs to the glycosyltransferase 28 family. MurG subfamily.

It localises to the cell inner membrane. It catalyses the reaction di-trans,octa-cis-undecaprenyl diphospho-N-acetyl-alpha-D-muramoyl-L-alanyl-D-glutamyl-meso-2,6-diaminopimeloyl-D-alanyl-D-alanine + UDP-N-acetyl-alpha-D-glucosamine = di-trans,octa-cis-undecaprenyl diphospho-[N-acetyl-alpha-D-glucosaminyl-(1-&gt;4)]-N-acetyl-alpha-D-muramoyl-L-alanyl-D-glutamyl-meso-2,6-diaminopimeloyl-D-alanyl-D-alanine + UDP + H(+). It participates in cell wall biogenesis; peptidoglycan biosynthesis. Functionally, cell wall formation. Catalyzes the transfer of a GlcNAc subunit on undecaprenyl-pyrophosphoryl-MurNAc-pentapeptide (lipid intermediate I) to form undecaprenyl-pyrophosphoryl-MurNAc-(pentapeptide)GlcNAc (lipid intermediate II). This Methylobacterium radiotolerans (strain ATCC 27329 / DSM 1819 / JCM 2831 / NBRC 15690 / NCIMB 10815 / 0-1) protein is UDP-N-acetylglucosamine--N-acetylmuramyl-(pentapeptide) pyrophosphoryl-undecaprenol N-acetylglucosamine transferase.